A 145-amino-acid polypeptide reads, in one-letter code: D-aminoacyl-tRNA deacylase (145 aa).

A Gly-cisPro motif, important for rejection of L-amino acids motif is present at residues 137-138; the sequence is GP.

Belongs to the DTD family. Homodimer.

The protein resides in the cytoplasm. It catalyses the reaction glycyl-tRNA(Ala) + H2O = tRNA(Ala) + glycine + H(+). It carries out the reaction a D-aminoacyl-tRNA + H2O = a tRNA + a D-alpha-amino acid + H(+). Functionally, an aminoacyl-tRNA editing enzyme that deacylates mischarged D-aminoacyl-tRNAs. Also deacylates mischarged glycyl-tRNA(Ala), protecting cells against glycine mischarging by AlaRS. Acts via tRNA-based rather than protein-based catalysis; rejects L-amino acids rather than detecting D-amino acids in the active site. By recycling D-aminoacyl-tRNA to D-amino acids and free tRNA molecules, this enzyme counteracts the toxicity associated with the formation of D-aminoacyl-tRNA entities in vivo and helps enforce protein L-homochirality. In Escherichia coli O7:K1 (strain IAI39 / ExPEC), this protein is D-aminoacyl-tRNA deacylase.